The chain runs to 394 residues: Ornithine aminotransferase 1 (394 aa).

K252 bears the N6-(pyridoxal phosphate)lysine mark.

Belongs to the class-III pyridoxal-phosphate-dependent aminotransferase family. OAT subfamily. Pyridoxal 5'-phosphate is required as a cofactor.

The protein resides in the cytoplasm. The enzyme catalyses a 2-oxocarboxylate + L-ornithine = L-glutamate 5-semialdehyde + an L-alpha-amino acid. The protein operates within amino-acid biosynthesis; L-proline biosynthesis; L-glutamate 5-semialdehyde from L-ornithine: step 1/1. Its function is as follows. Catalyzes the interconversion of ornithine to glutamate semialdehyde. This is Ornithine aminotransferase 1 from Staphylococcus aureus (strain MRSA252).